Here is a 305-residue protein sequence, read N- to C-terminus: MIKQRTLKRIVQTTGVGLHTGKKVTLTLRPASANTGVIYRRTDLNPPVDFPADAKSVRDTMLCTCLVNEHDVRISTVEHLNAALAGLGIDNIVVEVNAPEIPIMDGSAAPFIYLLMDAGIEELNSAKKFVRIKQPVRVEDGDKWAELSPHNGFSLDFTIDFNHPAIDASTQRYRMDFSAEAFARQISRARTFGFMRDIEALQSRGLALGGSFDCAIVVDDYRVLNEDGLRFEDEFVRHKMLDAIGDLYMCGNNIIGAFTAYKSGHALNNKLLQAVLAKQEAWEWATFEDEATLPVTFRAPNLVLA.

3 residues coordinate Zn(2+): His-79, His-238, and Asp-242. Residue His-265 is the Proton donor of the active site.

The protein belongs to the LpxC family. Zn(2+) is required as a cofactor.

The enzyme catalyses a UDP-3-O-[(3R)-3-hydroxyacyl]-N-acetyl-alpha-D-glucosamine + H2O = a UDP-3-O-[(3R)-3-hydroxyacyl]-alpha-D-glucosamine + acetate. It participates in glycolipid biosynthesis; lipid IV(A) biosynthesis; lipid IV(A) from (3R)-3-hydroxytetradecanoyl-[acyl-carrier-protein] and UDP-N-acetyl-alpha-D-glucosamine: step 2/6. In terms of biological role, catalyzes the hydrolysis of UDP-3-O-myristoyl-N-acetylglucosamine to form UDP-3-O-myristoylglucosamine and acetate, the committed step in lipid A biosynthesis. The chain is UDP-3-O-acyl-N-acetylglucosamine deacetylase from Erwinia tasmaniensis (strain DSM 17950 / CFBP 7177 / CIP 109463 / NCPPB 4357 / Et1/99).